The sequence spans 160 residues: Putative UPF0479 protein YLR466C-A (160 aa).

Transmembrane regions (helical) follow at residues 39-59 and 136-156; these read IVFC…KVLQ and VPMI…ISQH.

It belongs to the UPF0479 family.

The protein resides in the membrane. The chain is Putative UPF0479 protein YLR466C-A from Saccharomyces cerevisiae (strain ATCC 204508 / S288c) (Baker's yeast).